The following is a 323-amino-acid chain: Di/tripeptide transport ATP-binding protein DppF (323 aa).

In terms of domain architecture, ABC transporter spans 5 to 254 (LTARDLTRHY…PLHPYTRALL (250 aa)). Position 47-54 (47-54 (GESGCGKS)) interacts with ATP.

The protein belongs to the ABC transporter superfamily. As to quaternary structure, the complex is composed of two ATP-binding proteins (DppD and DppF), two transmembrane proteins (DppB and DppC) and a solute-binding protein (DppA1-A5). Five orthologous SBPs (DppA1-A5) are present in P.aeruginosa, which increases the substrate specificity of the DppBCDF transporter.

It is found in the cell inner membrane. It catalyses the reaction a dipeptide(out) + ATP + H2O = a dipeptide(in) + ADP + phosphate + H(+). Functionally, part of the ABC transporter DppABCDF involved in the uptake of various di/tripeptides. Is also involved in the uptake of phaseolotoxin, a toxic tripeptide inhibiting the enzyme ornithine carbamoyltransferase. Responsible for energy coupling to the transport system. In Pseudomonas aeruginosa (strain UCBPP-PA14), this protein is Di/tripeptide transport ATP-binding protein DppF.